The primary structure comprises 275 residues: Fos-related antigen 1 (275 aa).

Disordered regions lie at residues 1-33 and 71-115; these read MYRD…QTVQ and TYPQ…VRRE. A compositionally biased stretch (low complexity) spans 7–33; it reads EPGPSSGAGSAYGRPAQPQQAQTQTVQ. One can recognise a bZIP domain in the interval 107–170; sequence EERRRVRRER…ERLELVLEAH (64 aa). Residues 109 to 129 are basic motif; that stretch reads RRRVRRERNKLAAAKCRNRRK. Positions 135 to 163 are leucine-zipper; the sequence is LQAETDKLEDEKSGLQREIEELQKQKERL. A compositionally biased stretch (basic and acidic residues) spans 171 to 184; the sequence is RPICKIPEEDKKDT. Positions 171–275 are disordered; that stretch reads RPICKIPEED…PLGSPTLLAL (105 aa). Low complexity-rich tracts occupy residues 185-194, 219-237, and 256-275; these read GGTSSTSGAG, LHTP…TPSL, and SSSS…LLAL. S269 is subject to Phosphoserine.

Belongs to the bZIP family. Fos subfamily. As to quaternary structure, heterodimer. Interacts with the BAF multiprotein chromatin-remodeling complex subunits SMARCB1 and SMARCD1. Interacts with ARID1A and JUN.

It is found in the nucleus. In Rattus norvegicus (Rat), this protein is Fos-related antigen 1 (Fosl1).